The primary structure comprises 492 residues: Membrane-bound lytic murein transglycosylase F (492 aa).

Positions 1–18 (MKGLFLRIIAIVALLLWA) are cleaved as a signal peptide. The segment at 19–268 (IDMVFPWQQI…RIEEKYFNHL (250 aa)) is non-LT domain. Residues 270–492 (QFDYVDTRSY…DTLATTVTTQ (223 aa)) form an LT domain region. Residue Glu313 is part of the active site.

This sequence in the N-terminal section; belongs to the bacterial solute-binding protein 3 family. It in the C-terminal section; belongs to the transglycosylase Slt family.

The protein resides in the cell outer membrane. The catalysed reaction is Exolytic cleavage of the (1-&gt;4)-beta-glycosidic linkage between N-acetylmuramic acid (MurNAc) and N-acetylglucosamine (GlcNAc) residues in peptidoglycan, from either the reducing or the non-reducing ends of the peptidoglycan chains, with concomitant formation of a 1,6-anhydrobond in the MurNAc residue.. Murein-degrading enzyme that degrades murein glycan strands and insoluble, high-molecular weight murein sacculi, with the concomitant formation of a 1,6-anhydromuramoyl product. Lytic transglycosylases (LTs) play an integral role in the metabolism of the peptidoglycan (PG) sacculus. Their lytic action creates space within the PG sacculus to allow for its expansion as well as for the insertion of various structures such as secretion systems and flagella. The sequence is that of Membrane-bound lytic murein transglycosylase F from Pasteurella multocida (strain Pm70).